We begin with the raw amino-acid sequence, 310 residues long: MKITVIGAGNVGATAALKIAEKQFANEVVLIDVVEGIPQGKALDMYESGAVSLFDTRVIGSNDYKDSADSDIILITAGLARKPGMTREDLLMKNAAIIKEVTSQVMKYSTNPIIVMVSNPVDIMTYVAHRVSGLPKERVIGMGGVLDTARYKNFIAETLNISMQDISALVLGGHGDAMVPVVNYTNVAGIPLTELLPLDIIDGLVERTRNGGIEIVNYLKSGSAYYAPAASTVEMIEAIARDRKRILPCTTLLDGQYGINSVFCGVPVKLGKNGIEQVLEINLSAPERSALQRSADIVEKNCKMLESLFA.

NAD(+) contacts are provided by residues 7–12 (GAGNVG) and Asp32. Substrate contacts are provided by Arg81 and Arg87. NAD(+) is bound by residues Asn94 and 117-119 (VSN). 2 residues coordinate substrate: Asn119 and Arg150. His174 (proton acceptor) is an active-site residue.

Belongs to the LDH/MDH superfamily. MDH type 3 family.

It catalyses the reaction (S)-malate + NAD(+) = oxaloacetate + NADH + H(+). Functionally, catalyzes the reversible oxidation of malate to oxaloacetate. In Chlorobium chlorochromatii (strain CaD3), this protein is Malate dehydrogenase.